The following is a 419-amino-acid chain: Putative zinc metalloprotease SPs1691 (419 aa).

Histidine 18 is a binding site for Zn(2+). The active site involves glutamate 19. Histidine 22 contributes to the Zn(2+) binding site. A run of 4 helical transmembrane segments spans residues 169 to 191 (LITNFAGPMNNFILGIVVFILLV), 301 to 323 (LAWSGAFTILNALKGLITGFSLN), 343 to 365 (LESVLSLMAMLSINLGIFNLIPI), and 392 to 411 (AYITLAGVAIMVVLMIAVTW). Positions 175–274 (GPMNNFILGI…LKTVAVKPQK (100 aa)) constitute a PDZ domain.

This sequence belongs to the peptidase M50B family. It depends on Zn(2+) as a cofactor.

The protein localises to the cell membrane. This Streptococcus pyogenes serotype M3 (strain SSI-1) protein is Putative zinc metalloprotease SPs1691 (eep).